A 427-amino-acid chain; its full sequence is Trigger factor (427 aa).

Residues 163-248 (GDTVVIDFVG…IHEVKTKEVP (86 aa)) enclose the PPIase FKBP-type domain.

It belongs to the FKBP-type PPIase family. Tig subfamily.

Its subcellular location is the cytoplasm. It carries out the reaction [protein]-peptidylproline (omega=180) = [protein]-peptidylproline (omega=0). Its function is as follows. Involved in protein export. Acts as a chaperone by maintaining the newly synthesized protein in an open conformation. Functions as a peptidyl-prolyl cis-trans isomerase. This chain is Trigger factor (tig), found in Streptococcus pyogenes serotype M1.